The chain runs to 345 residues: Phosphoribosylformylglycinamidine cyclo-ligase (345 aa).

It belongs to the AIR synthase family.

It is found in the cytoplasm. The enzyme catalyses 2-formamido-N(1)-(5-O-phospho-beta-D-ribosyl)acetamidine + ATP = 5-amino-1-(5-phospho-beta-D-ribosyl)imidazole + ADP + phosphate + H(+). It functions in the pathway purine metabolism; IMP biosynthesis via de novo pathway; 5-amino-1-(5-phospho-D-ribosyl)imidazole from N(2)-formyl-N(1)-(5-phospho-D-ribosyl)glycinamide: step 2/2. The protein is Phosphoribosylformylglycinamidine cyclo-ligase of Escherichia coli O6:K15:H31 (strain 536 / UPEC).